A 424-amino-acid chain; its full sequence is Folate-like transporter 2 (424 aa).

Residue Asn-35 is glycosylated (N-linked (GlcNAc...) asparagine). The next 6 membrane-spanning stretches (helical) occupy residues 48 to 68 (IWTY…DVFL), 71 to 91 (PLLV…VFGK), 99 to 119 (LEVF…YIYV), 136 to 156 (ALLV…GLNW), 164 to 184 (IISL…PGVE), and 233 to 253 (PLIL…YQVT). Asn-254 is a glycosylation site (N-linked (GlcNAc...) asparagine). 4 helical membrane passes run 299-319 (WGDL…FWMS), 324-344 (IVVL…TTTI), 361-381 (LFGI…AVVI), and 392-412 (FVVY…IFGI).

Belongs to the reduced folate carrier (RFC) transporter (TC 2.A.48) family.

Its subcellular location is the membrane. In terms of biological role, unlike folt-1, does not appear to act as a folate transporter. The polypeptide is Folate-like transporter 2 (folt-2) (Caenorhabditis elegans).